The primary structure comprises 81 residues: MDPLIAAASVVAAALAVGLGAIGPGIGQGNAAGQAVEGIARQPEAEGKIRGTLLLSLAFMEALTIYGLVVSLVLLFANPFA.

Transmembrane regions (helical) follow at residues 3-23 and 57-77; these read PLIA…GAIG and LAFM…LLFA.

It belongs to the ATPase C chain family. In terms of assembly, F-type ATPases have 2 components, F(1) - the catalytic core - and F(0) - the membrane proton channel. F(1) has five subunits: alpha(3), beta(3), gamma(1), delta(1), epsilon(1). F(0) has four main subunits: a(1), b(1), b'(1) and c(10-14). The alpha and beta chains form an alternating ring which encloses part of the gamma chain. F(1) is attached to F(0) by a central stalk formed by the gamma and epsilon chains, while a peripheral stalk is formed by the delta, b and b' chains.

The protein resides in the cellular thylakoid membrane. In terms of biological role, f(1)F(0) ATP synthase produces ATP from ADP in the presence of a proton or sodium gradient. F-type ATPases consist of two structural domains, F(1) containing the extramembraneous catalytic core and F(0) containing the membrane proton channel, linked together by a central stalk and a peripheral stalk. During catalysis, ATP synthesis in the catalytic domain of F(1) is coupled via a rotary mechanism of the central stalk subunits to proton translocation. Its function is as follows. Key component of the F(0) channel; it plays a direct role in translocation across the membrane. A homomeric c-ring of between 10-14 subunits forms the central stalk rotor element with the F(1) delta and epsilon subunits. The protein is ATP synthase subunit c of Trichodesmium erythraeum (strain IMS101).